Here is a 433-residue protein sequence, read N- to C-terminus: GTPase Der (433 aa).

EngA-type G domains are found at residues Asn-3–Lys-167 and Ile-175–Thr-347. Residues Gly-9 to Ser-16, Asp-56 to Leu-60, Asn-119 to Asp-122, Gly-181 to Ser-188, Asp-228 to Val-232, and Asn-293 to Asp-296 each bind GTP. Positions Lys-348–Glu-432 constitute a KH-like domain.

It belongs to the TRAFAC class TrmE-Era-EngA-EngB-Septin-like GTPase superfamily. EngA (Der) GTPase family. In terms of assembly, associates with the 50S ribosomal subunit.

Functionally, GTPase that plays an essential role in the late steps of ribosome biogenesis. This Aquifex aeolicus (strain VF5) protein is GTPase Der.